Reading from the N-terminus, the 64-residue chain is Large ribosomal subunit protein bL35 (64 aa).

Residues 1–26 (MPKIKTHRGAAKRFKKTGTGKIKRSK) show a composition bias toward basic residues. Residues 1 to 48 (MPKIKTHRGAAKRFKKTGTGKIKRSKAYASHLLGGKSPKRKRNLRKAG) form a disordered region.

Belongs to the bacterial ribosomal protein bL35 family.

The sequence is that of Large ribosomal subunit protein bL35 from Syntrophomonas wolfei subsp. wolfei (strain DSM 2245B / Goettingen).